Here is a 297-residue protein sequence, read N- to C-terminus: UDP-N-acetylenolpyruvoylglucosamine reductase (297 aa).

Residues 27–191 form the FAD-binding PCMH-type domain; that stretch reads TGGNADIFVM…LDATFSLELE (165 aa). Arg170 is an active-site residue. Catalysis depends on Ser220, which acts as the Proton donor. Glu290 is an active-site residue.

This sequence belongs to the MurB family. The cofactor is FAD.

It is found in the cytoplasm. It carries out the reaction UDP-N-acetyl-alpha-D-muramate + NADP(+) = UDP-N-acetyl-3-O-(1-carboxyvinyl)-alpha-D-glucosamine + NADPH + H(+). The protein operates within cell wall biogenesis; peptidoglycan biosynthesis. In terms of biological role, cell wall formation. This is UDP-N-acetylenolpyruvoylglucosamine reductase from Listeria welshimeri serovar 6b (strain ATCC 35897 / DSM 20650 / CCUG 15529 / CIP 8149 / NCTC 11857 / SLCC 5334 / V8).